Reading from the N-terminus, the 151-residue chain is Protein INO4 (151 aa).

In terms of domain architecture, bHLH spans 45 to 97 (QIRINHVSSEKKRRELERAIFDELVAVVPDLQPQESRSELIIYLKSLSYLSWL). The segment at 112–137 (HEAKTGSSSSSDPVQEQNGNIRDLVP) is disordered. A compositionally biased stretch (polar residues) spans 116 to 131 (TGSSSSSDPVQEQNGN).

As to quaternary structure, efficient DNA binding requires dimerization with another bHLH protein.

The protein resides in the nucleus. Its function is as follows. Transcriptional activator of phospholipid synthetic genes (such as INO1, CHO1/PSS, CHO2/PEM1, OPI3/PEM2, etc.). This Saccharomyces cerevisiae (strain ATCC 204508 / S288c) (Baker's yeast) protein is Protein INO4 (INO4).